Consider the following 307-residue polypeptide: Glutenin, low molecular weight subunit 1D1 (307 aa).

The N-terminal stretch at 1-23 (MKTFLVFALLAVAATSAIAQMET) is a signal peptide. Disordered stretches follow at residues 31 to 88 (RPWQ…ILPQ) and 105 to 126 (PFSQ…QQQQ). The segment covering 43-88 (TFPQQPLFSQQQQQQLFPQQPSFSQQQPPFWQQQPPFSQQQPILPQ) has biased composition (low complexity).

This sequence belongs to the gliadin/glutenin family. As to quaternary structure, disulfide-bridge linked aggregates. In terms of tissue distribution, expressed in endosperm, but not in husk and leaf tissues.

Functionally, glutenins are high-molecular weight seed storage proteins of wheat endosperm. Thought to be responsible for the visco-elastic property of wheat dough. This is Glutenin, low molecular weight subunit 1D1 from Triticum aestivum (Wheat).